The sequence spans 623 residues: Zona pellucida sperm-binding protein 1 (623 aa).

The signal sequence occupies residues 1 to 20; that stretch reads MAWGCFVVLLLLAAAPLRLG. At Q21 the chain carries Pyrrolidone carboxylic acid. Residues 21–590 are Extracellular-facing; that stretch reads QRLHLEPGFE…GSSRNSSSRM (570 aa). N-linked (GlcNAc...) asparagine glycosylation is found at N49 and N68. The tract at residues 182–201 is disordered; that stretch reads IHPTPAPPSLGPGPAGSTVP. Residues 226 to 266 form the P-type domain; sequence ERCQVASGHIPCMVNGSSKETCQQAGCCYDSTKEEPCYYGN. 3 disulfide bridges follow: C228/C253, C237/C252, and C247/C262. N-linked (GlcNAc...) asparagine glycosylation occurs at N240. Positions 271 to 542 constitute a ZP domain; it reads QCFKSGYFTL…DTCSTTCDSG (272 aa). N-linked (GlcNAc...) asparagine glycosylation occurs at N371. C449 and C470 are oxidised to a cystine. A propeptide spans 547-623 (removed in mature form); that stretch reads RRSSGHHNIT…AQKLWEGIRY (77 aa). N-linked (GlcNAc...) asparagine glycans are attached at residues N554 and N585. A helical transmembrane segment spans residues 591 to 611; it reads LLLLLAITLALAAGIFVGLIW. Residues 612-623 are Cytoplasmic-facing; sequence AWAQKLWEGIRY.

It belongs to the ZP domain family. ZPB subfamily. As to quaternary structure, polymers of ZP2 and ZP3 organized into long filaments cross-linked by ZP1 homodimers. Interacts with ZP3. In terms of processing, proteolytically cleaved before the transmembrane segment to yield the secreted ectodomain incorporated in the zona pellucida. O-glycosylated. As to expression, expressed in oocytes.

Its subcellular location is the zona pellucida. The protein localises to the cell membrane. In terms of biological role, component of the zona pellucida, an extracellular matrix surrounding oocytes which mediates sperm binding, induction of the acrosome reaction and prevents post-fertilization polyspermy. The zona pellucida is composed of 3 to 4 glycoproteins, ZP1, ZP2, ZP3, and ZP4. ZP1 ensures the structural integrity of the zona pellucida. The sequence is that of Zona pellucida sperm-binding protein 1 (Zp1) from Mus musculus (Mouse).